Here is a 338-residue protein sequence, read N- to C-terminus: Phosphoribosylformylglycinamidine cyclo-ligase (338 aa).

This sequence belongs to the AIR synthase family.

It is found in the cytoplasm. The enzyme catalyses 2-formamido-N(1)-(5-O-phospho-beta-D-ribosyl)acetamidine + ATP = 5-amino-1-(5-phospho-beta-D-ribosyl)imidazole + ADP + phosphate + H(+). The protein operates within purine metabolism; IMP biosynthesis via de novo pathway; 5-amino-1-(5-phospho-D-ribosyl)imidazole from N(2)-formyl-N(1)-(5-phospho-D-ribosyl)glycinamide: step 2/2. The sequence is that of Phosphoribosylformylglycinamidine cyclo-ligase from Lactococcus lactis subsp. lactis (strain IL1403) (Streptococcus lactis).